The following is a 159-amino-acid chain: uncharacterized protein (159 aa).

This sequence belongs to the mimivirus L15/L51/R83 family.

This is an uncharacterized protein from Acanthamoeba polyphaga mimivirus (APMV).